We begin with the raw amino-acid sequence, 394 residues long: Deoxyguanosinetriphosphate triphosphohydrolase-like protein (394 aa).

Positions 1–36 (MSQAPYFVPRAPYAEDPSKSKGRRFKEDESRTRTPF) are disordered. The segment covering 25 to 36 (FKEDESRTRTPF) has biased composition (basic and acidic residues). One can recognise an HD domain in the interval 70-210 (RLTHTLEVAQ…AALADDIAYN (141 aa)).

It belongs to the dGTPase family. Type 2 subfamily.

This Caulobacter vibrioides (strain ATCC 19089 / CIP 103742 / CB 15) (Caulobacter crescentus) protein is Deoxyguanosinetriphosphate triphosphohydrolase-like protein.